The primary structure comprises 432 residues: Enolase (432 aa).

A (2R)-2-phosphoglycerate-binding site is contributed by Gln166. The active-site Proton donor is Glu208. Asp245, Glu291, and Asp318 together coordinate Mg(2+). (2R)-2-phosphoglycerate contacts are provided by Lys343, Arg372, Ser373, and Lys394. Catalysis depends on Lys343, which acts as the Proton acceptor.

The protein belongs to the enolase family. Mg(2+) is required as a cofactor.

It is found in the cytoplasm. The protein resides in the secreted. The protein localises to the cell surface. The catalysed reaction is (2R)-2-phosphoglycerate = phosphoenolpyruvate + H2O. It functions in the pathway carbohydrate degradation; glycolysis; pyruvate from D-glyceraldehyde 3-phosphate: step 4/5. Functionally, catalyzes the reversible conversion of 2-phosphoglycerate (2-PG) into phosphoenolpyruvate (PEP). It is essential for the degradation of carbohydrates via glycolysis. The chain is Enolase from Leptospira borgpetersenii serovar Hardjo-bovis (strain L550).